We begin with the raw amino-acid sequence, 442 residues long: Inhibitor of Apoptosis OPG037 (442 aa).

ANK repeat units lie at residues Asp67–Ala96, His100–Asn131, Asp203–Lys233, Phe237–Asp267, Tyr292–Asp321, and Met323–Ser347.

This sequence belongs to the orthopoxvirus OPG037 family. May interact with host caspase-9-Apaf-1 complex.

Its subcellular location is the host cytoplasm. In terms of biological role, inhibits host apoptosis. Acts by associating with host apoptosome. This Monkeypox virus protein is Inhibitor of Apoptosis OPG037 (OPG037).